The primary structure comprises 273 residues: Large ribosomal subunit protein uL2 (273 aa).

Disordered regions lie at residues 35–54 (DSKS…TRHI) and 222–273 (GMAM…RRNK). The span at 39 to 49 (KSGGRNNNGRI) shows a compositional bias: polar residues. Over residues 229-239 (DHPHGGGEGRN) the composition is skewed to basic and acidic residues. Residues 253–273 (KGFKTRKNKRTDKYIVRRRNK) are compositionally biased toward basic residues.

The protein belongs to the universal ribosomal protein uL2 family. As to quaternary structure, part of the 50S ribosomal subunit. Forms a bridge to the 30S subunit in the 70S ribosome.

Its function is as follows. One of the primary rRNA binding proteins. Required for association of the 30S and 50S subunits to form the 70S ribosome, for tRNA binding and peptide bond formation. It has been suggested to have peptidyltransferase activity; this is somewhat controversial. Makes several contacts with the 16S rRNA in the 70S ribosome. This is Large ribosomal subunit protein uL2 from Aeromonas salmonicida (strain A449).